Here is a 4303-residue protein sequence, read N- to C-terminus: Polycystin-1 (4303 aa).

An N-terminal signal peptide occupies residues M1 to A23. The 44-residue stretch at G24–A67 folds into the LRRNT domain. The Extracellular segment spans residues G24–N3074. Residues N50 and N89 are each glycosylated (N-linked (GlcNAc...) asparagine). 2 LRR repeats span residues D68–S91 and A92–N113. 2 N-linked (GlcNAc...) asparagine glycosylation sites follow: N116 and N121. Residues N125–E178 form the LRRCT domain. A WSC domain is found at G177–A271. The N-linked (GlcNAc...) asparagine glycan is linked to N187. One can recognise a PKD 1 domain in the interval S272–L359. Positions G415–E531 constitute a C-type lectin domain. 2 cysteine pairs are disulfide-bonded: C436/C530 and C508/C522. A disordered region spans residues A616–Q635. 2 N-linked (GlcNAc...) asparagine glycosylation sites follow: N621 and N632. One can recognise an LDL-receptor class A; atypical domain in the interval P638 to S671. 3 disulfide bridges follow: C640/C653, C647/C665, and C660/C669. The region spanning L743–V817 is the PKD 2 domain. 32 N-linked (GlcNAc...) asparagine glycosylation sites follow: N746, N810, N841, N854, N890, N921, N1004, N1010, N1034, N1072, N1113, N1178, N1194, N1240, N1269, N1336, N1348, N1382, N1450, N1455, N1474, N1518, N1541, N1554, N1563, N1647, N1661, N1733, N1791, N1834, N1867, and N1880. PKD domains follow at residues A855–A928, L935–Q1020, Q1023–V1129, P1127–L1215, R1213–R1298, L1294–V1383, N1382–T1469, V1468–L1551, G1550–L1635, G1634–L1721, G1719–L1805, I1807–L1890, G1889–L1974, P1977–V2057, and A2060–E2148. N1991, N2050, N2074, N2125, N2248, N2353, N2395, N2412, N2567, N2578, N2645, N2718, N2754, N2841, N2878, N2925, N2956, and N2994 each carry an N-linked (GlcNAc...) asparagine glycan. The REJ domain maps to C2146–P2833. The region spanning P2862–R3063 is the GAIN-B domain. A disulfide bridge links C3015 with C3043. The tract at residues C3015–R3063 is GPS. A helical membrane pass occupies residues Y3075–L3095. Residues H3096–R3277 lie on the Cytoplasmic side of the membrane. In terms of domain architecture, PLAT spans F3118 to E3233. A helical membrane pass occupies residues I3278–W3298. Over Y3299 to V3323 the chain is Extracellular. A helical transmembrane segment spans residues A3324–F3344. Residues R3345–H3559 are Cytoplasmic-facing. Residues G3560 to F3580 traverse the membrane as a helical segment. Topologically, residues P3581–P3582 are extracellular. A helical membrane pass occupies residues G3583–W3603. The Cytoplasmic portion of the chain corresponds to E3604–K3665. A helical membrane pass occupies residues R3666–L3686. Topologically, residues A3687–L3901 are extracellular. 3 N-linked (GlcNAc...) asparagine glycosylation sites follow: N3738, N3790, and N3845. A helical membrane pass occupies residues L3902–W3922. The Cytoplasmic portion of the chain corresponds to H3923–A3935. Residues W3936–L3956 traverse the membrane as a helical segment. At G3957–S3984 the chain is on the extracellular side. The chain crosses the membrane as a helical span at residues S3985–Q4005. At L4006–L4027 the chain is on the cytoplasmic side. A helical transmembrane segment spans residues G4028–V4048. At S4049–L4090 the chain is on the extracellular side. A helical transmembrane segment spans residues W4091–Y4110. The Cytoplasmic portion of the chain corresponds to H4111–T4303. Disordered stretches follow at residues P4160–G4196 and L4243–T4303. S4166 is subject to Phosphoserine; by PRKX; in vitro. Residues S4185–D4195 show a composition bias toward polar residues. Residues E4220–S4251 adopt a coiled-coil conformation. Positions R4253–A4269 are enriched in low complexity. The segment covering L4292 to T4303 has biased composition (basic residues).

It belongs to the polycystin family. In terms of assembly, component of the heterotetrameric polycystin channel complex with PKD2; the tetramer contains one PKD1 chain and three PKD2 chains. Interacts with PKD2; the interaction is required for ciliary localization. Interacts with PKD2L1. Interacts with PRKX; involved in differentiation and controlled morphogenesis of the kidney. Interacts (via extracellular domain) with WNT3A, WNT4, WNT5A and WNT9B. Interacts with DVL1 and DVL2. Interacts with NPHP1 (via SH3 domain). Interacts with BBS1, BBS4, BBS5 and TTC8. Interacts with RGS7. Interacts (via the PKD repeats in the N-terminal extracellular region) with EPCIP; the interaction is not dependent on N-glycosylation of either protein. N-glycosylated. Post-translationally, after synthesis, undergoes cleavage between Leu-3048 and Thr-3049 in the GPS region of the GAIN-B domain. Cleavage at the GPS region occurs through a cis-autoproteolytic mechanism involving an ester-intermediate via N-O acyl rearrangement. This process takes place in the early secretory pathway, depends on initial N-glycosylation, and requires the REJ domain. There is evidence that cleavage at GPS region is incomplete. Uncleaved and cleaved products may have different functions in vivo.

It is found in the cell membrane. Its subcellular location is the cell projection. The protein resides in the cilium. It localises to the endoplasmic reticulum. The protein localises to the golgi apparatus. It is found in the vesicle. Its subcellular location is the secreted. The protein resides in the extracellular exosome. In terms of biological role, component of a heteromeric calcium-permeable ion channel formed by PKD1 and PKD2 that is activated by interaction between PKD1 and a Wnt family member, such as WNT3A and WNT9B. Both PKD1 and PKD2 are required for channel activity. Involved in renal tubulogenesis. Involved in fluid-flow mechanosensation by the primary cilium in renal epithelium. Acts as a regulator of cilium length, together with PKD2. The dynamic control of cilium length is essential in the regulation of mechanotransductive signaling. The cilium length response creates a negative feedback loop whereby fluid shear-mediated deflection of the primary cilium, which decreases intracellular cAMP, leads to cilium shortening and thus decreases flow-induced signaling. May be an ion-channel regulator. Involved in adhesive protein-protein and protein-carbohydrate interactions. Likely to be involved with polycystin-1-interacting protein 1 in the detection, sequestration and exocytosis of senescent mitochondria. The sequence is that of Polycystin-1 from Homo sapiens (Human).